Reading from the N-terminus, the 209-residue chain is Glycerol-3-phosphate acyltransferase (209 aa).

5 helical membrane-spanning segments follow: residues 5–25, 50–70, 74–94, 115–135, and 151–171; these read IIGMIIIAYLLGSIPTGLWIG, LGFKAGVVVLFIDILKGTLAA, YFLGISGTVNPLLIGLFASLG, ILLAYNPLLFVVACLIFIFVL, and AIFIIALFIHAWILAIVAGIL.

This sequence belongs to the PlsY family. In terms of assembly, probably interacts with PlsX.

It localises to the cell membrane. It carries out the reaction an acyl phosphate + sn-glycerol 3-phosphate = a 1-acyl-sn-glycero-3-phosphate + phosphate. The protein operates within lipid metabolism; phospholipid metabolism. Its function is as follows. Catalyzes the transfer of an acyl group from acyl-phosphate (acyl-PO(4)) to glycerol-3-phosphate (G3P) to form lysophosphatidic acid (LPA). This enzyme utilizes acyl-phosphate as fatty acyl donor, but not acyl-CoA or acyl-ACP. In Limosilactobacillus reuteri (strain DSM 20016) (Lactobacillus reuteri), this protein is Glycerol-3-phosphate acyltransferase.